Consider the following 204-residue polypeptide: Tat proofreading chaperone DmsD (204 aa).

It belongs to the TorD/DmsD family. DmsD subfamily.

Functionally, required for biogenesis/assembly of DMSO reductase, but not for the interaction of the DmsA signal peptide with the Tat system. May be part of a chaperone cascade complex that facilitates a folding-maturation pathway for the substrate protein. The chain is Tat proofreading chaperone DmsD from Escherichia coli O157:H7.